The chain runs to 1109 residues: MAYKSQHGVDDMVMLSKIANDSILDNLKKRYGGDVIYTYIGNVLISVNPFKQIKNLYSERNLLEYRGKFRYELPPHAYAVADDMYRSMYAEGQSQCVIISGESGAGKTEAAKLIMQYIAAVSGKGADVSRVKDVILESNPLLEAFGNAKTLRNNNSSRFGKYMEVQFNGIGDPEGGRVTNYLLEKSRVVYQTKGERNFHIFYQLLSGANQQLKSELRLDTPDKFNYLSASGCYTVDGVDDSGEFQDVCKAMKVIGLTDSEQKEVFRLVAAILYLGNVGFKNNAKDEAAIDQQSKKALENFAFLMQTDVSSCEKALCFRTISTGTQGRSARVSTYACPQNSEGAYYSRDALAKALYSRLFDWIVGRVNSALGYKQNSQSLMIGILDIYGFEIFEKNGFEQMVINYVNERLQQIFIELTLKTEQEEYFNEGIQWEQIDYFNNKICCDLIESKKPAGILTILDDVCNFPKGDDQKFLDRLKESFSSHAHFQSAAQSSSSFTIKHYAGDVEYCAEGFVDKNKDLLFNDLVELAACTTSKLIPQLFPEINCEKDKRKPTTAGFKIKESIGALVKALSACTPHYIRCIKPNGNKRANDFDTSLVMHQVKYLGLLENVRIRRAGYAYRQTYDKFFYRYRVCCKETWPNWTGGFESGVETILKSMDLEPKQYSKGKTKIFIRAPETVFNLEELRERKVFTYANKLQRFFLRFTLMSYYYSIQKGAADSMKSNKERRRLSIERPYQGDYINYRENFELKDIVKKNGNEKIMFTHAVNKYDRRSRCQRRVLLLSDTAIYFIATEKNKDKEDRKKRPWIYVQKRRLLLAGITSVELSKLSDGFVVLKTMNEHDQIFECRRKTEFLGTLIKAYKTGTLRINYNNSIGVAIKASKQGGKGKERIILFEKGIKPGESVFKGTKVSTPSDGLPADTVPNLTPPESLPVVSIPIYKPAMNAKNAPQNSGGPASNVKPSAKALYDFDAESSMELSFKEGDILTVLDQSSGDWWDAELKGRRGKVPSNYLQLIKNAAPPRAGGPPVPTGNRAPTTTTTSGGSTRGGFNNGPSTAPSGRGAAPPSSRGGMAPRGGSVAPPSSRGGIAPRGGIAPRGGMAPRGGMAPRV.

Residues 7–687 (HGVDDMVMLS…TVFNLEELRE (681 aa)) form the Myosin motor domain. 101 to 108 (GESGAGKT) serves as a coordination point for ATP. Residues 564-586 (IGALVKALSACTPHYIRCIKPNG) are actin-binding. The region spanning 725 to 919 (KERRRLSIER…VSTPSDGLPA (195 aa)) is the TH1 domain. The SH3 domain maps to 958–1017 (NVKPSAKALYDFDAESSMELSFKEGDILTVLDQSSGDWWDAELKGRRGKVPSNYLQLIKN). Residues 1017 to 1109 (NAAPPRAGGP…APRGGMAPRV (93 aa)) are disordered. Positions 1030–1043 (TGNRAPTTTTTSGG) are enriched in low complexity.

Belongs to the TRAFAC class myosin-kinesin ATPase superfamily. Myosin family. In terms of assembly, myosin I heavy chain is single-headed. Dimer of a heavy and a light chain. Inability to self-assemble into filaments.

It localises to the cell projection. The protein resides in the pseudopodium. Its subcellular location is the cytoplasm. The protein localises to the cell cortex. In terms of biological role, myosin is a protein that binds to actin and has ATPase activity that is activated by actin. Myosin id may have a role in chemotaxis and aggregation; it could serve to stabilize and even retract cortical structures, such as pseudopods and lamellopods. Involved in the process of phagocytosis. This chain is Myosin ID heavy chain (myoD), found in Dictyostelium discoideum (Social amoeba).